A 182-amino-acid polypeptide reads, in one-letter code: Large ribosomal subunit protein bL25 (182 aa).

Belongs to the bacterial ribosomal protein bL25 family. CTC subfamily. Part of the 50S ribosomal subunit; part of the 5S rRNA/L5/L18/L25 subcomplex. Contacts the 5S rRNA. Binds to the 5S rRNA independently of L5 and L18.

Its function is as follows. This is one of the proteins that binds to the 5S RNA in the ribosome where it forms part of the central protuberance. The sequence is that of Large ribosomal subunit protein bL25 from Borrelia garinii subsp. bavariensis (strain ATCC BAA-2496 / DSM 23469 / PBi) (Borreliella bavariensis).